Consider the following 336-residue polypeptide: Cytosolic Fe-S cluster assembly factor NBP35 (336 aa).

The disordered stretch occupies residues Met1–Ser20. Residues Cys35, Cys49, Cys52, and Cys58 each coordinate [4Fe-4S] cluster. Gly88–Ser95 provides a ligand contact to ATP. Positions 261 and 264 each coordinate [4Fe-4S] cluster.

It belongs to the Mrp/NBP35 ATP-binding proteins family. NUBP1/NBP35 subfamily. As to quaternary structure, heterotetramer of 2 NBP35 and 2 CFD1 chains. It depends on [4Fe-4S] cluster as a cofactor.

It localises to the cytoplasm. Its function is as follows. Component of the cytosolic iron-sulfur (Fe/S) protein assembly (CIA) machinery. Required for maturation of extramitochondrial Fe-S proteins. The NBP35-CFD1 heterotetramer forms a Fe-S scaffold complex, mediating the de novo assembly of an Fe-S cluster and its transfer to target apoproteins. In Cryptococcus neoformans var. neoformans serotype D (strain B-3501A) (Filobasidiella neoformans), this protein is Cytosolic Fe-S cluster assembly factor NBP35.